Reading from the N-terminus, the 179-residue chain is Cytochrome b6-f complex iron-sulfur subunit (179 aa).

Residues 21–43 (LLTFGTVTGVALGALYPVVNYFI) traverse the membrane as a helical segment. One can recognise a Rieske domain in the interval 61-162 (GNDVSVTKFL…TNVSDDKIVL (102 aa)). Positions 108, 110, 126, and 129 each coordinate [2Fe-2S] cluster. Cysteines 113 and 128 form a disulfide.

The protein belongs to the Rieske iron-sulfur protein family. As to quaternary structure, the 4 large subunits of the cytochrome b6-f complex are cytochrome b6, subunit IV (17 kDa polypeptide, PetD), cytochrome f and the Rieske protein, while the 4 small subunits are PetG, PetL, PetM and PetN. The complex functions as a dimer. [2Fe-2S] cluster serves as cofactor.

It is found in the cellular thylakoid membrane. It carries out the reaction 2 oxidized [plastocyanin] + a plastoquinol + 2 H(+)(in) = 2 reduced [plastocyanin] + a plastoquinone + 4 H(+)(out). Component of the cytochrome b6-f complex, which mediates electron transfer between photosystem II (PSII) and photosystem I (PSI), cyclic electron flow around PSI, and state transitions. The polypeptide is Cytochrome b6-f complex iron-sulfur subunit (Nostoc punctiforme (strain ATCC 29133 / PCC 73102)).